The following is a 244-amino-acid chain: uncharacterized protein (244 aa).

A signal peptide spans 1-19 (MRGIFFLILILNFIGLIFS). N-linked (GlcNAc...) asparagine glycans are attached at residues Asn45 and Asn77. 2 consecutive ShKT domains span residues 67-105 (CNNP…CGKC) and 113-149 (CSDK…CNRC). 3 cysteine pairs are disulfide-bonded: Cys113-Cys149, Cys122-Cys142, and Cys129-Cys146. N-linked (GlcNAc...) asparagine glycans are attached at residues Asn152 and Asn158. 2 consecutive ShKT domains span residues 171–205 (CTDL…CNAC) and 208–243 (CEDA…CNIC). 6 cysteine pairs are disulfide-bonded: Cys171–Cys205, Cys178–Cys198, Cys185–Cys202, Cys208–Cys243, Cys215–Cys236, and Cys224–Cys240.

This is an uncharacterized protein from Caenorhabditis elegans.